Here is a 296-residue protein sequence, read N- to C-terminus: 4-hydroxy-tetrahydrodipicolinate synthase (296 aa).

Thr-49 is a binding site for pyruvate. Catalysis depends on Tyr-137, which acts as the Proton donor/acceptor. Lys-165 functions as the Schiff-base intermediate with substrate in the catalytic mechanism. Ile-207 is a pyruvate binding site.

Belongs to the DapA family. Homotetramer; dimer of dimers.

It localises to the cytoplasm. The catalysed reaction is L-aspartate 4-semialdehyde + pyruvate = (2S,4S)-4-hydroxy-2,3,4,5-tetrahydrodipicolinate + H2O + H(+). Its pathway is amino-acid biosynthesis; L-lysine biosynthesis via DAP pathway; (S)-tetrahydrodipicolinate from L-aspartate: step 3/4. Functionally, catalyzes the condensation of (S)-aspartate-beta-semialdehyde [(S)-ASA] and pyruvate to 4-hydroxy-tetrahydrodipicolinate (HTPA). The sequence is that of 4-hydroxy-tetrahydrodipicolinate synthase from Afipia carboxidovorans (strain ATCC 49405 / DSM 1227 / KCTC 32145 / OM5) (Oligotropha carboxidovorans).